The sequence spans 303 residues: Aspartate carbamoyltransferase catalytic subunit (303 aa).

Carbamoyl phosphate-binding residues include arginine 51 and threonine 52. Lysine 80 contributes to the L-aspartate binding site. Positions 101, 129, and 132 each coordinate carbamoyl phosphate. The L-aspartate site is built by arginine 162 and arginine 221. Residues leucine 260 and proline 261 each contribute to the carbamoyl phosphate site.

The protein belongs to the aspartate/ornithine carbamoyltransferase superfamily. ATCase family. As to quaternary structure, heterooligomer of catalytic and regulatory chains.

It catalyses the reaction carbamoyl phosphate + L-aspartate = N-carbamoyl-L-aspartate + phosphate + H(+). Its pathway is pyrimidine metabolism; UMP biosynthesis via de novo pathway; (S)-dihydroorotate from bicarbonate: step 2/3. Catalyzes the condensation of carbamoyl phosphate and aspartate to form carbamoyl aspartate and inorganic phosphate, the committed step in the de novo pyrimidine nucleotide biosynthesis pathway. This chain is Aspartate carbamoyltransferase catalytic subunit, found in Saccharolobus solfataricus (strain ATCC 35092 / DSM 1617 / JCM 11322 / P2) (Sulfolobus solfataricus).